The following is a 1255-amino-acid chain: DNA-directed RNA polymerase subunit beta' (1255 aa).

The Zn(2+) site is built by C68, C70, C83, and C86. The Mg(2+) site is built by D457, D459, and D461. Residues C803, C885, C892, and C895 each contribute to the Zn(2+) site. The segment covering 1220-1240 has biased composition (acidic residues); that stretch reads NSDEEVSFTEDEYFEDEENDL. The segment at 1220-1255 is disordered; sequence NSDEEVSFTEDEYFEDEENDLSTENFDDLKFSEEEE. Positions 1246 to 1255 are enriched in basic and acidic residues; it reads DDLKFSEEEE.

Belongs to the RNA polymerase beta' chain family. The RNAP catalytic core consists of 2 alpha, 1 beta, 1 beta' and 1 omega subunit. When a sigma factor is associated with the core the holoenzyme is formed, which can initiate transcription. Requires Mg(2+) as cofactor. It depends on Zn(2+) as a cofactor.

The enzyme catalyses RNA(n) + a ribonucleoside 5'-triphosphate = RNA(n+1) + diphosphate. Functionally, DNA-dependent RNA polymerase catalyzes the transcription of DNA into RNA using the four ribonucleoside triphosphates as substrates. The polypeptide is DNA-directed RNA polymerase subunit beta' (Lachnoclostridium phytofermentans (strain ATCC 700394 / DSM 18823 / ISDg) (Clostridium phytofermentans)).